An 81-amino-acid chain; its full sequence is Cortexin-2 (81 aa).

A helical transmembrane segment spans residues 29 to 49; it reads TGFAFVGILCIFLGLLIIRCF.

The protein belongs to the cortexin family.

It is found in the membrane. This is Cortexin-2 (Ctxn2) from Mus musculus (Mouse).